A 248-amino-acid chain; its full sequence is Mannose-binding protein C (248 aa).

The signal sequence occupies residues Met-1–Ser-20. Residues Gly-42–Asn-99 form the Collagen-like domain. A disordered region spans residues Ile-43–Ser-110. Pro-47 bears the 4-hydroxyproline mark. Over residues Lys-49 to Glu-61 the composition is skewed to basic and acidic residues. Pro-73, Pro-79, Pro-82, and Pro-88 each carry 4-hydroxyproline. Residues Lys-75–Ser-87 are compositionally biased toward pro residues. Positions Arg-112–Leu-130 form a coiled coil. In terms of domain architecture, C-type lectin spans Val-134 to Glu-245. Intrachain disulfides connect Cys-155-Cys-244 and Cys-222-Cys-236.

In terms of assembly, oligomeric complex of 3 or more homotrimers. Interacts with MASP1 and MASP2. Interacts with MEP1A and MEP1B and may inhibit their catalytic activity. Hydroxylation on proline residues within the sequence motif, GXPG, is most likely to be 4-hydroxy as this fits the requirement for 4-hydroxylation in vertebrates.

It is found in the secreted. Calcium-dependent lectin involved in innate immune defense. Binds mannose, fucose and N-acetylglucosamine on different microorganisms and activates the lectin complement pathway. Binds to late apoptotic cells, as well as to apoptotic blebs and to necrotic cells, but not to early apoptotic cells, facilitating their uptake by macrophages. The chain is Mannose-binding protein C (MBL2) from Nomascus concolor (Black crested gibbon).